The primary structure comprises 115 residues: Large ribosomal subunit protein bL19 (115 aa).

It belongs to the bacterial ribosomal protein bL19 family.

Its function is as follows. This protein is located at the 30S-50S ribosomal subunit interface and may play a role in the structure and function of the aminoacyl-tRNA binding site. The chain is Large ribosomal subunit protein bL19 from Desulforudis audaxviator (strain MP104C).